Reading from the N-terminus, the 192-residue chain is UPF0312 protein Ent638_1570 (192 aa).

The N-terminal stretch at 1–22 (MKKRLLGIALGSLLFTTGSAVA) is a signal peptide.

The protein belongs to the UPF0312 family. Type 1 subfamily.

The protein resides in the periplasm. This is UPF0312 protein Ent638_1570 from Enterobacter sp. (strain 638).